Consider the following 271-residue polypeptide: Cytosolic Fe-S cluster assembly factor NUBP2 (271 aa).

The residue at position 1 (Met1) is an N-acetylmethionine. 22 to 29 (GKGGVGKS) contacts ATP. Residues Cys196 and Cys199 each contribute to the [4Fe-4S] cluster site.

This sequence belongs to the Mrp/NBP35 ATP-binding proteins family. NUBP2/CFD1 subfamily. Heterotetramer of 2 NUBP1 and 2 NUBP2 chains. Interacts with KIFC1. Interacts with NUBP1. Requires [4Fe-4S] cluster as cofactor. Widely expressed with highest expression in skeletal muscle.

The protein resides in the nucleus. It localises to the cytoplasm. The protein localises to the cytoskeleton. It is found in the microtubule organizing center. Its subcellular location is the centrosome. The protein resides in the cilium axoneme. It localises to the centriole. In terms of biological role, component of the cytosolic iron-sulfur (Fe/S) protein assembly (CIA) machinery. Required for maturation of extramitochondrial Fe-S proteins. The NUBP1-NUBP2 heterotetramer forms a Fe-S scaffold complex, mediating the de novo assembly of an Fe-S cluster and its transfer to target apoproteins. Negatively regulates cilium formation and structure. This Homo sapiens (Human) protein is Cytosolic Fe-S cluster assembly factor NUBP2.